The chain runs to 325 residues: D site-binding protein (325 aa).

3 disordered regions span residues 1 to 100 (MARP…PGLL), 124 to 198 (LEHG…DPDT), and 212 to 255 (LALS…EQKD). Over residues 17 to 28 (GPTGAPPGGGAL) the composition is skewed to gly residues. Low complexity-rich tracts occupy residues 29–38 (LGLRSLLQGT) and 71–80 (AGPADASAGA). The residue at position 86 (serine 86) is a Phosphoserine. The segment covering 88 to 100 (RGRPGAAPGPGLL) has biased composition (low complexity). Residues 129–153 (PPSPPPPGGPSPAPSPVRTPAPSPR) are compositionally biased toward pro residues. Low complexity predominate over residues 166-176 (PGHAPARAALG). Basic and acidic residues predominate over residues 221–236 (ETFDPRRHRFSEEELK). Residues 255-318 (DEKYWSRRYK…SHYRAVLSRY (64 aa)) enclose the bZIP domain. The tract at residues 257 to 279 (KYWSRRYKNNEAAKRSRDARRLK) is basic motif. Positions 283 to 297 (ISVRAAFLEKENALL) are leucine-zipper.

Belongs to the bZIP family. PAR subfamily. Binds DNA as a homodimer or a heterodimer. Can form a heterodimer with TEF.

It localises to the nucleus. Functionally, this transcriptional activator recognizes and binds to the sequence 5'-RTTAYGTAAY-3' found in the promoter of genes such as albumin, CYP2A4 and CYP2A5. It is not essential for circadian rhythm generation, but modulates important clock output genes. May be a direct target for regulation by the circadian pacemaker component clock. May affect circadian period and sleep regulation. In Bos taurus (Bovine), this protein is D site-binding protein (DBP).